The following is a 287-amino-acid chain: 4-hydroxybenzoate octaprenyltransferase (287 aa).

8 helical membrane-spanning segments follow: residues 19-39, 42-62, 95-115, 136-156, 166-186, 210-230, 233-253, and 264-284; these read IGSLLLLWPTLWALFLAADGL, WHVLIVFVLGVVFMRSAGCVI, FFAVLVVCSFLLVLTMNTLTI, YLPQFVLGLAFSWAIPMAYAA, WLLFVINALWTIAYDTQYAMV, IIGLLQLSVLALLIVLGSQLA, GIYYWGILAAAGFFVYQQWLI, and AFLNNNYVGGLIFIAISASVL.

It belongs to the UbiA prenyltransferase family. The cofactor is Mg(2+).

The protein resides in the cell inner membrane. The enzyme catalyses all-trans-octaprenyl diphosphate + 4-hydroxybenzoate = 4-hydroxy-3-(all-trans-octaprenyl)benzoate + diphosphate. Its pathway is cofactor biosynthesis; ubiquinone biosynthesis. In terms of biological role, catalyzes the prenylation of para-hydroxybenzoate (PHB) with an all-trans polyprenyl group. Mediates the second step in the final reaction sequence of ubiquinone-8 (UQ-8) biosynthesis, which is the condensation of the polyisoprenoid side chain with PHB, generating the first membrane-bound Q intermediate 3-octaprenyl-4-hydroxybenzoate. The protein is 4-hydroxybenzoate octaprenyltransferase of Aliivibrio fischeri (strain MJ11) (Vibrio fischeri).